Reading from the N-terminus, the 120-residue chain is Large ribosomal subunit protein bL17 (120 aa).

The protein belongs to the bacterial ribosomal protein bL17 family. Part of the 50S ribosomal subunit. Contacts protein L32.

The protein is Large ribosomal subunit protein bL17 of Geobacillus thermodenitrificans (strain NG80-2).